A 394-amino-acid polypeptide reads, in one-letter code: Immune-associated nucleotide-binding protein 12 (394 aa).

Residues 45-251 form the AIG1-type G domain; sequence KPARTLLLVG…YMADLSHEIR (207 aa). Residues 54–61 are G1; the sequence is GRSGNGKS. GTP is bound by residues 54 to 62 and serine 75; that span reads GRSGNGKSA. The tract at residues 81–85 is G2; it reads GVTTA. Residues 103-106 are G3; that stretch reads DTPG. A G4 region spans residues 173 to 176; sequence TNED. Residues 210-212 form a G5 region; it reads RNR. Asparagine 211 serves as a coordination point for GTP. The stretch at 289 to 387 forms a coiled coil; that stretch reads NQQLRQMMER…KQMATDLQKS (99 aa).

This sequence belongs to the TRAFAC class TrmE-Era-EngA-EngB-Septin-like GTPase superfamily. AIG1/Toc34/Toc159-like paraseptin GTPase family. IAN subfamily.

The sequence is that of Immune-associated nucleotide-binding protein 12 from Arabidopsis thaliana (Mouse-ear cress).